The chain runs to 169 residues: Styrene-oxide isomerase (169 aa).

Helical transmembrane passes span 13 to 33, 61 to 81, 85 to 105, and 129 to 149; these read GILMIFCTLLFGVGLWMHLVG, PALNGMMVIAVAFVLPSLGFA, PHLLGNIIILDGWANVGFYFF, and FLALAPAYLFGVLAMGALAVI.

It localises to the membrane. The enzyme catalyses styrene oxide = 2-phenylacetaldehyde. It participates in aromatic compound metabolism. Epoxystyrene isomerase that catalyzes the second step in the aerobic styrene degradation pathway by converting epoxystyrene to phenylacetaldehyde. This chain is Styrene-oxide isomerase (styC), found in Pseudomonas fluorescens.